Consider the following 197-residue polypeptide: Transmembrane 4 L6 family member 5 (197 aa).

The Cytoplasmic segment spans residues M1 to C9. Residues V10 to V30 form a helical membrane-spanning segment. Residues P31–Q46 are Extracellular-facing. The chain crosses the membrane as a helical span at residues V47 to A67. The Cytoplasmic segment spans residues V68–S90. A helical transmembrane segment spans residues V91–G111. Positions V91–H197 are interaction with MTOR and CASTOR1. Topologically, residues L112 to T157 are extracellular. L-arginine is bound at residue W124 to E129. 2 N-linked (GlcNAc...) asparagine glycosylation sites follow: N138 and N155. A helical transmembrane segment spans residues L158–V178. Residues N179–H197 lie on the Cytoplasmic side of the membrane.

This sequence belongs to the L6 tetraspanin family. As to quaternary structure, interacts with MTOR; the interaction is positively regulated by arginine and is negatively regulated by leucine. Interacts with SLC38A9. Interacts with SLC7A1; the interaction is negatively regulated by arginine. Interacts with CASTOR1; the interaction is positively regulated by leucine and is negatively regulated by arginine. As to expression, intestine. Overexpressed in pancreatic cancers.

It localises to the lysosome membrane. The protein resides in the cell membrane. In terms of biological role, acts as a lysosomal membrane arginine sensor. Forms a complex with MTOR and SLC38A9 on lysosomal membranes in an arginine-regulated manner, leading to arginine efflux which enables the activation of mTORC1 which subsequently leads to RPS6KB1 and EIF4EBP1 phosphorylations. Facilitates cell cycle G1/S phase progression and the translocation of the CDK4-CCND1 complex into the nucleus. CDKN1B and RHOA/ROCK signaling activity are involved in TM4SF5-mediated acceleration of G1/S phase progression. The sequence is that of Transmembrane 4 L6 family member 5 (TM4SF5) from Homo sapiens (Human).